The following is a 144-amino-acid chain: Putative sugar phosphate isomerase RBE_0278 (144 aa).

H12 contacts substrate. Catalysis depends on H101, which acts as the Proton donor. Position 135 (R135) interacts with substrate.

This sequence belongs to the LacAB/RpiB family.

The protein is Putative sugar phosphate isomerase RBE_0278 of Rickettsia bellii (strain RML369-C).